The primary structure comprises 198 residues: Paired-like homeodomain transcription factor LEUTX (198 aa).

Residues 33–67 (PSLATMGKLASKLQLDLSVVKIWFKNQRAKWKRQQ) constitute a DNA-binding region (homeobox). The tract at residues 65–133 (RQQRQQMQTR…PGGASASARV (69 aa)) is disordered. The LEUTX region stretch occupies residues 79–190 (PANQTTSVKK…NQYLFPVCLE (112 aa)). A compositionally biased stretch (basic and acidic residues) spans 110–119 (ANDHDLREPS). Short sequence motifs (9aaTAD) lie at residues 125-136 (GGASASARVSSW), 153-161 (PPWASTLFE), 163-171 (DEFVKIYDL), and 178-186 (SSLNQYLFP).

Belongs to the paired homeobox family.

It localises to the nucleus. Paired-like homeobox transcription factor involved in embryogenesis. May act as a regulator of embryo genome activation. Binds to a 36 bp DNA elements containing a 5'-TAATCC-3' sequence motif, referred to as EEA motif (EGA-enriched Alu-motif), present in the promoters of target genes activated in early embryos. Functionally, inactive transcriptional activity. The sequence is that of Paired-like homeodomain transcription factor LEUTX from Homo sapiens (Human).